Here is a 116-residue protein sequence, read N- to C-terminus: U30-theraphotoxin-Cg1b (116 aa).

The signal sequence occupies residues 1-17 (MKLCVLTIATLLVTATS). Positions 18–53 (LETQKEIAEGNELTREETPSLVEHKEDEAAAASEKR) are excised as a propeptide. The disordered stretch occupies residues 25 to 45 (AEGNELTREETPSLVEHKEDE). Cystine bridges form between Cys-55/Cys-69, Cys-62/Cys-75, Cys-66/Cys-112, and Cys-68/Cys-88.

This sequence belongs to the neurotoxin 03 (Tx2) family. 02 subfamily. Expressed by the venom gland.

The protein localises to the secreted. Its function is as follows. Probable ion channel inhibitor. The protein is U30-theraphotoxin-Cg1b of Chilobrachys guangxiensis (Chinese earth tiger tarantula).